The primary structure comprises 121 residues: uncharacterized protein (121 aa).

A disordered region spans residues 1–121 (MGQVLSICSS…QQEREQIKWD (121 aa)). G2 carries N-myristoyl glycine lipidation. The S-palmitoyl cysteine moiety is linked to residue C8. Basic and acidic residues-rich tracts occupy residues 11-23 (KSKEKKVVNEKPT), 73-83 (AAEKRNIEKKK), 90-105 (RQLEKERAKPMKEHLQ), and 112-121 (QQEREQIKWD).

To yeast YGL108C. Myristoylated. Post-translationally, the N-myristoylated protein is further palmitoylated.

It is found in the cytoplasm. The protein resides in the cytosol. This is an uncharacterized protein from Schizosaccharomyces pombe (strain 972 / ATCC 24843) (Fission yeast).